We begin with the raw amino-acid sequence, 1098 residues long: Early transcription factor large subunit homolog (1098 aa).

The Helicase ATP-binding domain occupies 17–317; that stretch reads KGGRAFFPCD…PNGQPLQRQQ (301 aa). 64–71 is an ATP binding site; it reads WQTGTGKS. The short motif at 246–249 is the DEAH box element; the sequence is DEIH. The Helicase C-terminal domain occupies 489–689; sequence MMKDILSIIR…EGDKALRKHA (201 aa).

Belongs to the DEAD box helicase family. DEAH subfamily.

The protein localises to the virion. It catalyses the reaction ATP + H2O = ADP + phosphate + H(+). Its function is as follows. Putative initation factor. This chain is Early transcription factor large subunit homolog, found in African swine fever virus (isolate Tick/Malawi/Lil 20-1/1983) (ASFV).